A 496-amino-acid polypeptide reads, in one-letter code: Lysine--tRNA ligase (496 aa).

Mg(2+) is bound by residues E409 and E416.

The protein belongs to the class-II aminoacyl-tRNA synthetase family. In terms of assembly, homodimer. Mg(2+) is required as a cofactor.

It is found in the cytoplasm. It catalyses the reaction tRNA(Lys) + L-lysine + ATP = L-lysyl-tRNA(Lys) + AMP + diphosphate. The sequence is that of Lysine--tRNA ligase from Streptococcus pneumoniae (strain CGSP14).